The sequence spans 731 residues: Auxin response factor 3 (731 aa).

Low complexity predominate over residues 1–22; sequence MASSASSSSSPSSRPPLMALPS. Residues 1–41 form a disordered region; that stretch reads MASSASSSSSPSSRPPLMALPSFYRPPWPSERGGEQRATDC. The segment at residues 191–293 is a DNA-binding region (TF-B3); the sequence is FCKTLTASDT…ELRLGVRRAT (103 aa).

Belongs to the ARF family. In terms of assembly, homo and heterodimers. Expressed in roots, culms, leaves and young panicles.

It is found in the nucleus. Auxin response factors (ARFs) are transcriptional factors that bind specifically to the DNA sequence 5'-TGTCTC-3' found in the auxin-responsive promoter elements (AuxREs). The polypeptide is Auxin response factor 3 (ARF3) (Oryza sativa subsp. japonica (Rice)).